A 253-amino-acid polypeptide reads, in one-letter code: Eukaryotic initiation factor 4A-6 (253 aa).

The Helicase ATP-binding domain maps to 1 to 82 (HVVVGTPGRV…RKFMNKPVRI (82 aa)). Positions 30–33 (DEAD) match the DEAD box motif. Positions 93-253 (GIKQFYVNVD…EELPANVADL (161 aa)) constitute a Helicase C-terminal domain.

Belongs to the DEAD box helicase family. eIF4A subfamily. As to quaternary structure, eIF4F is a multi-subunit complex, the composition of which varies with external and internal environmental conditions. It is composed of at least EIF4A, EIF4E and EIF4G.

It catalyses the reaction ATP + H2O = ADP + phosphate + H(+). In terms of biological role, ATP-dependent RNA helicase which is a subunit of the eIF4F complex involved in cap recognition and is required for mRNA binding to ribosome. In the current model of translation initiation, eIF4A unwinds RNA secondary structures in the 5'-UTR of mRNAs which is necessary to allow efficient binding of the small ribosomal subunit, and subsequent scanning for the initiator codon. The polypeptide is Eukaryotic initiation factor 4A-6 (Nicotiana tabacum (Common tobacco)).